The sequence spans 106 residues: Large ribosomal subunit protein uL24 (106 aa).

This sequence belongs to the universal ribosomal protein uL24 family. Part of the 50S ribosomal subunit.

Its function is as follows. One of two assembly initiator proteins, it binds directly to the 5'-end of the 23S rRNA, where it nucleates assembly of the 50S subunit. In terms of biological role, one of the proteins that surrounds the polypeptide exit tunnel on the outside of the subunit. This Spiroplasma kunkelii protein is Large ribosomal subunit protein uL24.